Consider the following 361-residue polypeptide: RLA class I histocompatibility antigen, alpha chain 11/11 (361 aa).

The N-terminal stretch at 1–24 is a signal peptide; that stretch reads MGSMAPRTLLLLLAGALTLKDTQA. The segment at 25–114 is alpha-1; the sequence is GSHSMRYFYT…ALRYYNQSAA (90 aa). Residues 25–308 lie on the Extracellular side of the membrane; sequence GSHSMRYFYT…EPPAQPTALI (284 aa). Residue N110 is glycosylated (N-linked (GlcNAc...) asparagine). The tract at residues 115–206 is alpha-2; sequence GSHTFQTMFG…EMGKETLQRA (92 aa). Intrachain disulfides connect C125-C188 and C227-C283. Residues 207–298 are alpha-3; it reads DPPKAHVTHH…GLPEPLTLTW (92 aa). Residues 209–297 enclose the Ig-like C1-type domain; the sequence is PKAHVTHHPA…EGLPEPLTLT (89 aa). The tract at residues 299–308 is connecting peptide; that stretch reads EPPAQPTALI. A helical membrane pass occupies residues 309-329; it reads VGIVAGVLGVLLILGAVVAVV. The Cytoplasmic segment spans residues 330 to 361; the sequence is RRKKHSSDGKGGRYTPAAGGHRDQGSDDSLMP. The disordered stretch occupies residues 335 to 361; the sequence is SSDGKGGRYTPAAGGHRDQGSDDSLMP. 2 positions are modified to phosphoserine: S355 and S358.

The protein belongs to the MHC class I family. In terms of assembly, heterodimer of an alpha chain and a beta chain (beta-2-microglobulin).

It localises to the membrane. Its function is as follows. Involved in the presentation of foreign antigens to the immune system. The protein is RLA class I histocompatibility antigen, alpha chain 11/11 of Oryctolagus cuniculus (Rabbit).